We begin with the raw amino-acid sequence, 418 residues long: Deubiquitinase and deneddylase Dub1 (418 aa).

Over residues 1-10 (MLSPTNSISK) the composition is skewed to polar residues. The segment at 1 to 23 (MLSPTNSISKTAPVPPQDSSKPV) is disordered. A helical transmembrane segment spans residues 40 to 60 (TALAVLLVVVTLGLILLFYSF). The tract at residues 72–144 (TRPSTKEQPT…PLPPKAPKPV (73 aa)) is disordered. Over residues 86-141 (VPLPSPPLAVPRPSTPPPPVISRPSTPPAPTPAISPPSTPSAPKPSTPPPLPPKAP) the composition is skewed to pro residues. Catalysis depends on residues His288, Asp305, and Cys358.

Belongs to the peptidase C48 family.

It localises to the secreted. It is found in the host cell. Its subcellular location is the membrane. In terms of biological role, effector proteins function to alter host cell physiology and promote bacterial survival in host tissues. This protease possesses deubiquitinating and deneddylating activities. The protein is Deubiquitinase and deneddylase Dub1 (cdu1) of Chlamydia trachomatis serovar B (strain TZ1A828/OT).